The sequence spans 35 residues: Photosystem II reaction center protein T (35 aa).

A helical membrane pass occupies residues 3 to 23 (ALVYTFLLXSTLGIIFFAIFF).

The protein belongs to the PsbT family. As to quaternary structure, PSII is composed of 1 copy each of membrane proteins PsbA, PsbB, PsbC, PsbD, PsbE, PsbF, PsbH, PsbI, PsbJ, PsbK, PsbL, PsbM, PsbT, PsbY, PsbZ, Psb30/Ycf12, at least 3 peripheral proteins of the oxygen-evolving complex and a large number of cofactors. It forms dimeric complexes.

Its subcellular location is the plastid. The protein localises to the chloroplast thylakoid membrane. In terms of biological role, found at the monomer-monomer interface of the photosystem II (PS II) dimer, plays a role in assembly and dimerization of PSII. PSII is a light-driven water plastoquinone oxidoreductase, using light energy to abstract electrons from H(2)O, generating a proton gradient subsequently used for ATP formation. The polypeptide is Photosystem II reaction center protein T (Cunninghamia lanceolata (China fir)).